Reading from the N-terminus, the 95-residue chain is Secretoglobin family 2A member 1 (95 aa).

A signal peptide spans 1 to 18 (MKLVFLFLLVTIPICCYA). Residues N35 and N72 are each glycosylated (N-linked (GlcNAc...) asparagine).

This sequence belongs to the secretoglobin family. Lipophilin subfamily. As to quaternary structure, prostatein is composed of three different peptides called C1, C2 and C3. These form covalent C1:C3 (F) and C2:C3 (S) heterodimers whose non-covalent association forms tetrameric (C1:C3/C3:C2) prostatein molecules. As to expression, expressed at very low level in ventral prostate.

It is found in the secreted. Part of prostatein which is the major secretory glycoprotein of ventral prostate gland. Steroid-binding protein; can bind non-polar steroids, cholesterol and a group of small proline-rich peptides. This Rattus norvegicus (Rat) protein is Secretoglobin family 2A member 1.